A 146-amino-acid chain; its full sequence is Ribosomal RNA large subunit methyltransferase H (146 aa).

S-adenosyl-L-methionine is bound by residues Leu-60, Gly-93, and 112-117; that span reads MGKMTL.

Belongs to the RNA methyltransferase RlmH family. As to quaternary structure, homodimer.

The protein localises to the cytoplasm. The catalysed reaction is pseudouridine(1915) in 23S rRNA + S-adenosyl-L-methionine = N(3)-methylpseudouridine(1915) in 23S rRNA + S-adenosyl-L-homocysteine + H(+). In terms of biological role, specifically methylates the pseudouridine at position 1915 (m3Psi1915) in 23S rRNA. The sequence is that of Ribosomal RNA large subunit methyltransferase H from Koribacter versatilis (strain Ellin345).